The primary structure comprises 339 residues: Anthranilate phosphoribosyltransferase (339 aa).

5-phospho-alpha-D-ribose 1-diphosphate-binding positions include G81, 84–85, S89, 91–94, 109–117, and A121; these read GD, NVSS, and KHGNRALSS. Residue G81 coordinates anthranilate. Residue S93 participates in Mg(2+) binding. Anthranilate is bound at residue N112. Residue R167 coordinates anthranilate. Residues D225 and E226 each contribute to the Mg(2+) site.

Belongs to the anthranilate phosphoribosyltransferase family. In terms of assembly, homodimer. Requires Mg(2+) as cofactor.

It catalyses the reaction N-(5-phospho-beta-D-ribosyl)anthranilate + diphosphate = 5-phospho-alpha-D-ribose 1-diphosphate + anthranilate. It participates in amino-acid biosynthesis; L-tryptophan biosynthesis; L-tryptophan from chorismate: step 2/5. Catalyzes the transfer of the phosphoribosyl group of 5-phosphorylribose-1-pyrophosphate (PRPP) to anthranilate to yield N-(5'-phosphoribosyl)-anthranilate (PRA). This is Anthranilate phosphoribosyltransferase from Brucella abortus (strain S19).